The sequence spans 828 residues: Periplasmic nitrate reductase (828 aa).

The segment at residues 1-31 is a signal peptide (tat-type signal); it reads MKLSRRHFMKANAVAAAAAVAGITIPIAVRA. A 4Fe-4S Mo/W bis-MGD-type domain is found at 39–95; the sequence is IHWDKAPCRFCGVGCGVLVGTQNGRIVASQGDPEAPVNRGLNCIKGYFLPKIMYGQD. C46, C49, C53, and C81 together coordinate [4Fe-4S] cluster. Mo-bis(molybdopterin guanine dinucleotide)-binding positions include K83, Q150, N175, C179, 212–219, 243–247, 262–264, M372, Q376, N482, 508–509, K531, D558, and 718–727; these read WGSNMAEM, STYQH, QTD, SD, and TGRVLEHWHT. F794 contacts substrate. Positions 802 and 819 each coordinate Mo-bis(molybdopterin guanine dinucleotide).

This sequence belongs to the prokaryotic molybdopterin-containing oxidoreductase family. NasA/NapA/NarB subfamily. In terms of assembly, component of the periplasmic nitrate reductase NapAB complex composed of NapA and NapB. The cofactor is [4Fe-4S] cluster. Mo-bis(molybdopterin guanine dinucleotide) serves as cofactor. Predicted to be exported by the Tat system. The position of the signal peptide cleavage has not been experimentally proven.

It is found in the periplasm. The enzyme catalyses 2 Fe(II)-[cytochrome] + nitrate + 2 H(+) = 2 Fe(III)-[cytochrome] + nitrite + H2O. Functionally, catalytic subunit of the periplasmic nitrate reductase complex NapAB. Receives electrons from NapB and catalyzes the reduction of nitrate to nitrite. The protein is Periplasmic nitrate reductase of Pectobacterium atrosepticum (strain SCRI 1043 / ATCC BAA-672) (Erwinia carotovora subsp. atroseptica).